The primary structure comprises 93 residues: C-C motif chemokine 14 (93 aa).

Positions 1–19 (MKISVAAIPFFLLITIALG) are cleaved as a signal peptide. A glycan (O-linked (GalNAc...) serine; partial) is linked at serine 26. 2 disulfides stabilise this stretch: cysteine 35–cysteine 59 and cysteine 36–cysteine 75.

This sequence belongs to the intercrine beta (chemokine CC) family. Post-translationally, the N-terminal processed forms HCC-1(3-74), HCC-1(4-74) and HCC-1(9-74) are produced in small amounts by proteolytic cleavage after secretion in blood. HCC-1(1-74), but not HCC-1(3-74) and HCC-1(4-74), is partially O-glycosylated; the O-linked glycan consists of one Gal-GalNAc disaccharide, further modified by two N-acetylneuraminic acids. As to expression, expressed constitutively in several normal tissues: spleen, liver, skeletal and heart muscle, gut, and bone marrow, present at high concentrations (1-80 nM) in plasma.

It is found in the secreted. In terms of biological role, has weak activities on human monocytes and acts via receptors that also recognize MIP-1 alpha. It induces intracellular Ca(2+) changes and enzyme release, but no chemotaxis, at concentrations of 100-1,000 nM, and is inactive on T-lymphocytes, neutrophils, and eosinophil leukocytes. Enhances the proliferation of CD34 myeloid progenitor cells. The processed form HCC-1(9-74) is a chemotactic factor that attracts monocytes, eosinophils, and T-cells and is a ligand for CCR1, CCR3 and CCR5. In Homo sapiens (Human), this protein is C-C motif chemokine 14 (CCL14).